We begin with the raw amino-acid sequence, 302 residues long: MATVANFLAKPISTVVPRPSSAVASTSSFVFFNHKTNPLFRRKNLPKRLFSAVKIKAGAASPGKVGTPPANDEKVQKIHSGEEFDVALKNAKSKLVVAEFATSKSDQSNKIYPFMVELSRTCNDVVFLLVMGDESDKTRELCRREKIEKVPHFSFYKSMEKIHEEEGIEPDQLMGDVLYYGDNHSAVVQLHGRPDVEKLIDENRTGGKLIVLDVGLKHCGPCVKVYPTVLKLSRSMSETVVFARMNGDENDSCMEFLKDMNVIEVPTFLFIRDGEIRGRYVGSGKGELIGEILRYSGVRVTY.

Residues 1 to 56 (MATVANFLAKPISTVVPRPSSAVASTSSFVFFNHKTNPLFRRKNLPKRLFSAVKIK) constitute a chloroplast transit peptide. The 136-residue stretch at 163–298 (HEEEGIEPDQ…IGEILRYSGV (136 aa)) folds into the Thioredoxin domain. Active-site nucleophile residues include C219 and C222. A disulfide bridge connects residues C219 and C222.

Belongs to the thioredoxin family. Interacts with the plastidial peroxiredoxin BAS1.

The protein resides in the plastid. It localises to the chloroplast stroma. Functionally, probable thiol-disulfide oxidoreductase involved in resistance to oxidative stress. May participate in the reduction of alkyl hydroperoxides derived from oxidative stress by acting as a physiological electron donor to the BAS1 peroxiredoxin. May regenerate methionine sulfoxide reductase B1 (MSRB1) activity through sulfenic acid reduction. The polypeptide is Thioredoxin-like protein CDSP32, chloroplastic (CDSP32) (Arabidopsis thaliana (Mouse-ear cress)).